A 628-amino-acid polypeptide reads, in one-letter code: MGSCARLLLLWGCTVVAAGLSGVAGVSSRCEKACNPRMGNLALGRKLWADTTCGQNATELYCFYSENTDLTCRQPKCDKCNAAYPHLAHLPSAMADSSFRFPRTWWQSAEDVHREKIQLDLEAEFYFTHLIVMFKSPRPAAMVLDRSQDFGKTWKPYKYFATNCSATFGLEDDVVKKGAICTSKYSSPFPCTGGEVIFKALSPPYDTENPYSAKVQEQLKITNLRVQLLKRQSCPCQRNDLNEEPQHFTHYAIYDFIVKGSCFCNGHADQCIPVHGFRPVKAPGTFHMVHGKCMCKHNTAGSHCQHCAPLYNDRPWEAADGKTGAPNECRTCKCNGHADTCHFDVNVWEASGNRSGGVCDDCQHNTEGQYCQRCKPGFYRDLRRPFSAPDACKPCSCHPVGSAVLPANSVTFCDPSNGDCPCKPGVAGRRCDRCMVGYWGFGDYGCRPCDCAGSCDPITGDCISSHTDIDWYHEVPDFRPVHNKSEPAWEWEDAQGFSALLHSGKCECKEQTLGNAKAFCGMKYSYVLKIKILSAHDKGTHVEVNVKIKKVLKSTKLKIFRGKRTLYPESWTDRGCTCPILNPGLEYLVAGHEDIRTGKLIVNMKSFVQHWKPSLGRKVMDILKRECK.

Residues 1–18 form the signal peptide; it reads MGSCARLLLLWGCTVVAA. The 232-residue stretch at 30-261 folds into the Laminin N-terminal domain; sequence CEKACNPRMG…AIYDFIVKGS (232 aa). Asparagine 56 and asparagine 163 each carry an N-linked (GlcNAc...) asparagine glycan. Intrachain disulfides connect cysteine 262–cysteine 271, cysteine 264–cysteine 293, cysteine 295–cysteine 304, cysteine 307–cysteine 329, cysteine 332–cysteine 341, cysteine 334–cysteine 359, cysteine 362–cysteine 371, cysteine 374–cysteine 392, cysteine 395–cysteine 413, cysteine 397–cysteine 420, cysteine 422–cysteine 431, and cysteine 434–cysteine 446. Laminin EGF-like domains follow at residues 262–331, 332–394, and 395–448; these read CFCN…ECRT, CKCN…ACKP, and CSCH…GCRP. Residue asparagine 353 is glycosylated (N-linked (GlcNAc...) asparagine). Asparagine 483 carries an N-linked (GlcNAc...) asparagine glycan. 2 disulfide bridges follow: cysteine 506–cysteine 576 and cysteine 520–cysteine 627. The NTR domain maps to 506 to 627; it reads CECKEQTLGN…KVMDILKREC (122 aa).

May form a homodimer. Expressed in kidney, spleen, mammary gland, aorta, heart, ovary, prostate and fetal spleen.

Its subcellular location is the secreted. The protein localises to the extracellular space. It localises to the extracellular matrix. The protein resides in the basement membrane. Functionally, may play an important role in neural, kidney and vascular development. Promotes neurite elongation from olfactory bulb explants. This chain is Netrin-4 (NTN4), found in Homo sapiens (Human).